Consider the following 501-residue polypeptide: 2-phosphoxylose phosphatase 1 (501 aa).

Topologically, residues 1–6 (MLLRNR) are cytoplasmic. The helical; Signal-anchor for type II membrane protein transmembrane segment at 7 to 27 (FLLLLALAGLLAFLSLSLQFF) threads the bilayer. Topologically, residues 28 to 501 (SRWLPVSLQL…YYDACHQRLF (474 aa)) are lumenal. The active-site Nucleophile is the His120. N-linked (GlcNAc...) asparagine glycans are attached at residues Asn328 and Asn377. Asp402 serves as the catalytic Proton donor. Asn488 carries N-linked (GlcNAc...) asparagine glycosylation.

This sequence belongs to the histidine acid phosphatase family.

Its subcellular location is the golgi apparatus membrane. It carries out the reaction 3-O-[beta-D-GlcA-(1-&gt;3)-beta-D-Gal-(1-&gt;3)-beta-D-Gal-(1-&gt;4)-beta-D-2-O-P-Xyl]-L-seryl-[protein] + H2O = 3-O-(beta-D-GlcA-(1-&gt;3)-beta-D-Gal-(1-&gt;3)-beta-D-Gal-(1-&gt;4)-beta-D-Xyl)-L-seryl-[protein] + phosphate. Functionally, responsible for the 2-O-dephosphorylation of xylose in the glycosaminoglycan-protein linkage region of proteoglycans thereby regulating the amount of mature glycosaminoglycan (GAG) chains. Sulfated glycosaminoglycans (GAGs), including heparan sulfate and chondroitin sulfate, are synthesized on the so-called common GAG-protein linkage region (GlcUAbeta1-3Galbeta1-3Galbeta1-4Xylbeta1-O-Ser) of core proteins, which is formed by the stepwise addition of monosaccharide residues by the respective specific glycosyltransferases. Xylose 2-O-dephosphorylation during completion of linkage region formation is a prerequisite for the initiation and efficient elongation of the repeating disaccharide region of GAG chains. The chain is 2-phosphoxylose phosphatase 1 from Xenopus tropicalis (Western clawed frog).